The chain runs to 738 residues: Phosphoribosylformylglycinamidine synthase subunit PurL (738 aa).

Histidine 53 is a catalytic residue. 2 residues coordinate ATP: tyrosine 56 and lysine 95. Residue glutamate 97 participates in Mg(2+) binding. Substrate-binding positions include 98–101 and arginine 120; that span reads SHNH. Histidine 99 serves as the catalytic Proton acceptor. Aspartate 121 contributes to the Mg(2+) binding site. Residue glutamine 244 coordinates substrate. Aspartate 274 lines the Mg(2+) pocket. 318–320 is a binding site for substrate; that stretch reads ESQ. ATP is bound by residues aspartate 499 and glycine 536. Asparagine 537 provides a ligand contact to Mg(2+). Residue serine 539 coordinates substrate.

The protein belongs to the FGAMS family. In terms of assembly, monomer. Part of the FGAM synthase complex composed of 1 PurL, 1 PurQ and 2 PurS subunits.

It localises to the cytoplasm. The catalysed reaction is N(2)-formyl-N(1)-(5-phospho-beta-D-ribosyl)glycinamide + L-glutamine + ATP + H2O = 2-formamido-N(1)-(5-O-phospho-beta-D-ribosyl)acetamidine + L-glutamate + ADP + phosphate + H(+). It participates in purine metabolism; IMP biosynthesis via de novo pathway; 5-amino-1-(5-phospho-D-ribosyl)imidazole from N(2)-formyl-N(1)-(5-phospho-D-ribosyl)glycinamide: step 1/2. Its function is as follows. Part of the phosphoribosylformylglycinamidine synthase complex involved in the purines biosynthetic pathway. Catalyzes the ATP-dependent conversion of formylglycinamide ribonucleotide (FGAR) and glutamine to yield formylglycinamidine ribonucleotide (FGAM) and glutamate. The FGAM synthase complex is composed of three subunits. PurQ produces an ammonia molecule by converting glutamine to glutamate. PurL transfers the ammonia molecule to FGAR to form FGAM in an ATP-dependent manner. PurS interacts with PurQ and PurL and is thought to assist in the transfer of the ammonia molecule from PurQ to PurL. This is Phosphoribosylformylglycinamidine synthase subunit PurL from Leuconostoc mesenteroides subsp. mesenteroides (strain ATCC 8293 / DSM 20343 / BCRC 11652 / CCM 1803 / JCM 6124 / NCDO 523 / NBRC 100496 / NCIMB 8023 / NCTC 12954 / NRRL B-1118 / 37Y).